Reading from the N-terminus, the 159-residue chain is Cyclic pyranopterin monophosphate synthase (159 aa).

Residues 75-77 (LCH) and 113-114 (ME) contribute to the substrate site. Asp-128 is a catalytic residue.

Belongs to the MoaC family. As to quaternary structure, homohexamer; trimer of dimers.

The catalysed reaction is (8S)-3',8-cyclo-7,8-dihydroguanosine 5'-triphosphate = cyclic pyranopterin phosphate + diphosphate. It functions in the pathway cofactor biosynthesis; molybdopterin biosynthesis. In terms of biological role, catalyzes the conversion of (8S)-3',8-cyclo-7,8-dihydroguanosine 5'-triphosphate to cyclic pyranopterin monophosphate (cPMP). This chain is Cyclic pyranopterin monophosphate synthase, found in Yersinia pseudotuberculosis serotype O:1b (strain IP 31758).